The chain runs to 563 residues: Calmodulin-binding protein 60 G (563 aa).

A calmodulin-binding region spans residues 1 to 76; the sequence is MKIRNSPSFH…SSCVSMERSR (76 aa). Residues 147 to 263 form a DNA-binding region; it reads ESWTVEGFNR…VSATRLAERK (117 aa).

This sequence belongs to the plant ACBP60 protein family. In terms of assembly, interacts with calmodulin (CaM) in the presence of calcium ions; this interaction is required for defense responses. (Microbial infection) Interacts with V.dahliae SCP41; the interaction is direct and inhibits CBP60G. In terms of tissue distribution, expressed in seedlings, roots, leaves, inflorescences and flowers, and, to a lower extent, in siliques. Particularly present in guard cells.

The protein resides in the nucleus. Transcription activator that binds DNA in a sequence-specific manner, 5'-GAAATTTTGG-3', to promote the expression of target genes. Recruited to the promoter of ICS1 and other defense-related genes (e.g. PR1, PR2 and EDS5) in response to both biotic (e.g. Pseudomonas syringae pv. maculicola ES4326, P.syringae pv. tomato DC3000, and microbe-associated molecular patterns (MAMPs) such as flg22) and abiotic stresses (e.g. UV-B, drought and abscisic acid), thus triggering rapid defense responses by stimulating salicylic acid (SA) biosynthesis. Involved in basal and systemic acquired resistance to P.syringae and Hyaloperonospora arabidopsidis. Mediates resistance to drought and sensitivity to abscisic acid (ABA), especially for ABA-mediated signaling process that regulates early seedling growth. In Arabidopsis thaliana (Mouse-ear cress), this protein is Calmodulin-binding protein 60 G.